The sequence spans 146 residues: Hemoglobin subunit beta (146 aa).

The residue at position 1 (V1) is an N-acetylvaline. Residues 2–146 (HLTGEEKAAV…VANALAHKYH (145 aa)) form the Globin domain. At T12 the chain carries Phosphothreonine. At S44 the chain carries Phosphoserine. The residue at position 59 (K59) is an N6-acetyllysine. Position 63 (H63) interacts with heme b. N6-acetyllysine is present on K82. H92 is a heme b binding site. C93 carries the S-nitrosocysteine modification. K144 is subject to N6-acetyllysine.

This sequence belongs to the globin family. As to quaternary structure, heterotetramer of two alpha chains and two beta chains. In terms of tissue distribution, red blood cells.

Involved in oxygen transport from the lung to the various peripheral tissues. This Aotus trivirgatus (Three-striped night monkey) protein is Hemoglobin subunit beta (HBB).